Here is a 280-residue protein sequence, read N- to C-terminus: 4-diphosphocytidyl-2-C-methyl-D-erythritol kinase (280 aa).

The active site involves K8. 91–101 (PIEAGLAGGSS) provides a ligand contact to ATP. D133 is an active-site residue.

It belongs to the GHMP kinase family. IspE subfamily.

The enzyme catalyses 4-CDP-2-C-methyl-D-erythritol + ATP = 4-CDP-2-C-methyl-D-erythritol 2-phosphate + ADP + H(+). It participates in isoprenoid biosynthesis; isopentenyl diphosphate biosynthesis via DXP pathway; isopentenyl diphosphate from 1-deoxy-D-xylulose 5-phosphate: step 3/6. Its function is as follows. Catalyzes the phosphorylation of the position 2 hydroxy group of 4-diphosphocytidyl-2C-methyl-D-erythritol. This chain is 4-diphosphocytidyl-2-C-methyl-D-erythritol kinase, found in Clostridium tetani (strain Massachusetts / E88).